Here is a 388-residue protein sequence, read N- to C-terminus: Succinate--CoA ligase [ADP-forming] subunit beta (388 aa).

Residues 9–244 form the ATP-grasp domain; it reads KDLLVSYDIA…PSQENVRDVL (236 aa). Residues Lys46, 53 to 55, Val102, and Glu107 each bind ATP; that span reads GRG. Asn199 and Asp213 together coordinate Mg(2+). Residues Asn264 and 321-323 each bind substrate; that span reads GIM.

It belongs to the succinate/malate CoA ligase beta subunit family. As to quaternary structure, heterotetramer of two alpha and two beta subunits. It depends on Mg(2+) as a cofactor.

The enzyme catalyses succinate + ATP + CoA = succinyl-CoA + ADP + phosphate. The catalysed reaction is GTP + succinate + CoA = succinyl-CoA + GDP + phosphate. Its pathway is carbohydrate metabolism; tricarboxylic acid cycle; succinate from succinyl-CoA (ligase route): step 1/1. Functionally, succinyl-CoA synthetase functions in the citric acid cycle (TCA), coupling the hydrolysis of succinyl-CoA to the synthesis of either ATP or GTP and thus represents the only step of substrate-level phosphorylation in the TCA. The beta subunit provides nucleotide specificity of the enzyme and binds the substrate succinate, while the binding sites for coenzyme A and phosphate are found in the alpha subunit. The chain is Succinate--CoA ligase [ADP-forming] subunit beta from Chlamydia caviae (strain ATCC VR-813 / DSM 19441 / 03DC25 / GPIC) (Chlamydophila caviae).